The chain runs to 263 residues: Small ribosomal subunit protein eS1 (263 aa).

A disordered region spans residues 235 to 263 (HGEGGGGKGEAGDKSERPEGYEPPVQESV). Residues 244-254 (EAGDKSERPEG) are compositionally biased toward basic and acidic residues.

The protein belongs to the eukaryotic ribosomal protein eS1 family. Component of the small ribosomal subunit. Mature ribosomes consist of a small (40S) and a large (60S) subunit. The 40S subunit contains about 33 different proteins and 1 molecule of RNA (18S). The 60S subunit contains about 49 different proteins and 3 molecules of RNA (28S, 5.8S and 5S).

The protein resides in the cytoplasm. This chain is Small ribosomal subunit protein eS1, found in Bombyx mori (Silk moth).